The sequence spans 167 residues: Transcription antitermination protein NusB (167 aa).

The disordered stretch occupies residues 1 to 21 (MIPTDTAPPSKPAQGHKGYKN).

The protein belongs to the NusB family.

Its function is as follows. Involved in transcription antitermination. Required for transcription of ribosomal RNA (rRNA) genes. Binds specifically to the boxA antiterminator sequence of the ribosomal RNA (rrn) operons. In Nitrosomonas eutropha (strain DSM 101675 / C91 / Nm57), this protein is Transcription antitermination protein NusB.